The following is a 373-amino-acid chain: D-alanine--D-alanine ligase A (373 aa).

Residues 146–355 (KRLAEFAGIP…YGELLSRLVD (210 aa)) form the ATP-grasp domain. An ATP-binding site is contributed by 179–234 (VEGLSLPVFVKPCNMGSSVGIHKVKTQDALEAALDDAFRYDVKVLVQQGIDAREIE). Residues aspartate 308, glutamate 322, and asparagine 324 each contribute to the Mg(2+) site.

It belongs to the D-alanine--D-alanine ligase family. It depends on Mg(2+) as a cofactor. Requires Mn(2+) as cofactor.

It is found in the cytoplasm. It catalyses the reaction 2 D-alanine + ATP = D-alanyl-D-alanine + ADP + phosphate + H(+). Its pathway is cell wall biogenesis; peptidoglycan biosynthesis. In terms of biological role, cell wall formation. This is D-alanine--D-alanine ligase A from Bradyrhizobium diazoefficiens (strain JCM 10833 / BCRC 13528 / IAM 13628 / NBRC 14792 / USDA 110).